The primary structure comprises 101 residues: MARSICFFAVAILALMLFAAYETEAGTCKAECPTWEGICINKAPCVKCCKAQPEKFTDGHCSKILRRCLCTKPCATEEATATLANEVKTMAEALVEEDMME.

The first 25 residues, 1–25, serve as a signal peptide directing secretion; sequence MARSICFFAVAILALMLFAAYETEA. 5 cysteine pairs are disulfide-bonded: Cys28-Cys74, Cys32-Cys48, Cys39-Cys61, Cys45-Cys68, and Cys49-Cys70. Positions 75–101 are cleaved as a propeptide — removed in mature form; the sequence is ATEEATATLANEVKTMAEALVEEDMME.

The protein belongs to the DEFL family. When compared to other plant defensins, the petunia defensins have an additional fifth disulfide bond. Petals.

The protein resides in the secreted. It localises to the vacuole. In terms of biological role, plant defense peptide with antifungal activity against F.oxysporum and B.cinerea. This Petunia hybrida (Petunia) protein is Floral defensin-like protein 2 (D2).